Reading from the N-terminus, the 380-residue chain is PqqA peptide cyclase (380 aa).

The region spanning 8–223 is the Radical SAM core domain; it reads VNPPLWLLAE…VADYRQKMAA (216 aa). Residues Cys-22, Cys-26, and Cys-29 each coordinate [4Fe-4S] cluster.

Belongs to the radical SAM superfamily. PqqE family. As to quaternary structure, interacts with PqqD. The interaction is necessary for activity of PqqE. The cofactor is [4Fe-4S] cluster.

The enzyme catalyses [PQQ precursor protein] + S-adenosyl-L-methionine = E-Y cross-linked-[PQQ precursor protein] + 5'-deoxyadenosine + L-methionine + H(+). The protein operates within cofactor biosynthesis; pyrroloquinoline quinone biosynthesis. Catalyzes the cross-linking of a glutamate residue and a tyrosine residue in the PqqA protein as part of the biosynthesis of pyrroloquinoline quinone (PQQ). This Klebsiella pneumoniae (strain 342) protein is PqqA peptide cyclase.